A 261-amino-acid chain; its full sequence is MSGMVALRLPRGLWTAALTVMLVVLGAPVAEGRDSPQDFVFQFKGECYFYNGTQRVRGVARYIYNQEEHLRFDSDVGEFRAVTPLGRPEADSWNSQKDVLEQMRAEVDRVCKHNYQIEEGTTLQRRVQPTVTISPSKAEALNHHNLLVCAVTDFYPSQVKVQWFRNGQEETAGVVSTPLIRNGDWTYQVLVMLEMNLQRGDVYTCRVEHSSLQNPILVEWRAQSESAQSKMLSGVGGFVLGLIFLGLGLFIRHRSQKGLVR.

A signal peptide spans 1 to 31; it reads MSGMVALRLPRGLWTAALTVMLVVLGAPVAE. The interval 32–126 is beta-1; that stretch reads GRDSPQDFVF…IEEGTTLQRR (95 aa). Topologically, residues 32–230 are extracellular; sequence GRDSPQDFVF…RAQSESAQSK (199 aa). 2 disulfide bridges follow: Cys47–Cys111 and Cys149–Cys205. N-linked (GlcNAc...) asparagine glycosylation occurs at Asn51. The tract at residues 127–220 is beta-2; that stretch reads VQPTVTISPS…SLQNPILVEW (94 aa). In terms of domain architecture, Ig-like C1-type spans 129–233; the sequence is PTVTISPSKA…SESAQSKMLS (105 aa). The tract at residues 221-230 is connecting peptide; it reads RAQSESAQSK. Residues 231–251 traverse the membrane as a helical segment; sequence MLSGVGGFVLGLIFLGLGLFI. The Cytoplasmic portion of the chain corresponds to 252 to 261; the sequence is RHRSQKGLVR.

Belongs to the MHC class II family.

The protein localises to the membrane. This chain is SLA class II histocompatibility antigen, DQ haplotype C beta chain, found in Sus scrofa (Pig).